We begin with the raw amino-acid sequence, 144 residues long: Large ribosomal subunit protein uL11 (144 aa).

The protein belongs to the universal ribosomal protein uL11 family. As to quaternary structure, part of the ribosomal stalk of the 50S ribosomal subunit. Interacts with L10 and the large rRNA to form the base of the stalk. L10 forms an elongated spine to which L12 dimers bind in a sequential fashion forming a multimeric L10(L12)X complex. In terms of processing, one or more lysine residues are methylated.

Forms part of the ribosomal stalk which helps the ribosome interact with GTP-bound translation factors. The chain is Large ribosomal subunit protein uL11 from Rhodococcus erythropolis (strain PR4 / NBRC 100887).